We begin with the raw amino-acid sequence, 389 residues long: Aspartic protease pepA (389 aa).

Positions 1–20 are cleaved as a signal peptide; the sequence is MVLINQLGAVLAVCATLTVA. Residues 21 to 67 constitute a propeptide, activation peptide; it reads APTKGKARFNVPQVAIPKKMVHHPAVSYARALHKFGMKVPKTVQDAA. The 305-residue stretch at 82–386 folds into the Peptidase A1 domain; that stretch reads YVTQVTVGEG…DTQGPRIGFA (305 aa). Asp98 is a catalytic residue. An N-linked (GlcNAc...) asparagine glycan is attached at Asn257. The active site involves Asp279. Cys315 and Cys348 are disulfide-bonded.

It belongs to the peptidase A1 family. Monomer.

It localises to the secreted. Secreted aspartic endopeptidase that allows assimilation of proteinaceous substrates. The scissile peptide bond is attacked by a nucleophilic water molecule activated by two aspartic residues in the active site. Shows a broad primary substrate specificity. Favors hydrophobic residues at the P1 and P1' positions. The sequence is that of Aspartic protease pepA from Arthroderma otae (strain ATCC MYA-4605 / CBS 113480) (Microsporum canis).